The sequence spans 434 residues: ATP-dependent RNA helicase uap56 (434 aa).

The interval 1 to 43 (MASAQEDLIDYEEEEELVQDQPAQEITPAADTAENGEKSDKKG) is disordered. Positions 7–18 (DLIDYEEEEELV) are enriched in acidic residues. Positions 51 to 79 (TGFRDFLLKPELLRAITDSGFEHPSEVQQ) match the Q motif motif. Residues 82–257 (IPQSILGTDV…KKFMQNPLEI (176 aa)) enclose the Helicase ATP-binding domain. Position 95 to 102 (95 to 102 (AKSGMGKT)) interacts with ATP. The DECD box signature appears at 204–207 (DECD). The region spanning 269-430 (GLQQHYVKLE…ELPDEIDVGS (162 aa)) is the Helicase C-terminal domain.

The protein belongs to the DEAD box helicase family. DECD subfamily. Interacts with mlo3 and rae1.

The protein localises to the nucleus. The catalysed reaction is ATP + H2O = ADP + phosphate + H(+). ATP-binding RNA helicase involved in transcription elongation and required for the export of mRNA out of the nucleus. SUB2 also plays a role in pre-mRNA splicing and spliceosome assembly. May be involved in rDNA and telomeric silencing, and maintenance of genome integrity. Links the mRNA adapter mlo3 to rae1 for targeting mRNA-protein complex to the proteins of the nucleoporin complex (NPC). The sequence is that of ATP-dependent RNA helicase uap56 (uap56) from Schizosaccharomyces pombe (strain 972 / ATCC 24843) (Fission yeast).